The chain runs to 402 residues: F-box protein At4g22390 (402 aa).

The F-box domain maps to 1–49 (MAECPTDLINEMFLRLRATTLVKCRVLSKPCFSLIDSPEFVSSHLRRRL).

This Arabidopsis thaliana (Mouse-ear cress) protein is F-box protein At4g22390.